The sequence spans 134 residues: ATP synthase epsilon chain, chloroplastic (134 aa).

The protein belongs to the ATPase epsilon chain family. In terms of assembly, F-type ATPases have 2 components, CF(1) - the catalytic core - and CF(0) - the membrane proton channel. CF(1) has five subunits: alpha(3), beta(3), gamma(1), delta(1), epsilon(1). CF(0) has three main subunits: a, b and c.

The protein resides in the plastid. It is found in the chloroplast thylakoid membrane. In terms of biological role, produces ATP from ADP in the presence of a proton gradient across the membrane. The polypeptide is ATP synthase epsilon chain, chloroplastic (Pyropia yezoensis (Susabi-nori)).